We begin with the raw amino-acid sequence, 153 residues long: NAD(P)H-quinone oxidoreductase subunit N (153 aa).

Belongs to the complex I NdhN subunit family. NDH-1 can be composed of about 15 different subunits; different subcomplexes with different compositions have been identified which probably have different functions.

The protein resides in the cellular thylakoid membrane. The catalysed reaction is a plastoquinone + NADH + (n+1) H(+)(in) = a plastoquinol + NAD(+) + n H(+)(out). It carries out the reaction a plastoquinone + NADPH + (n+1) H(+)(in) = a plastoquinol + NADP(+) + n H(+)(out). In terms of biological role, NDH-1 shuttles electrons from an unknown electron donor, via FMN and iron-sulfur (Fe-S) centers, to quinones in the respiratory and/or the photosynthetic chain. The immediate electron acceptor for the enzyme in this species is believed to be plastoquinone. Couples the redox reaction to proton translocation, and thus conserves the redox energy in a proton gradient. Cyanobacterial NDH-1 also plays a role in inorganic carbon-concentration. In Prochlorococcus marinus (strain MIT 9211), this protein is NAD(P)H-quinone oxidoreductase subunit N.